Consider the following 157-residue polypeptide: Small ribosomal subunit protein uS7 (157 aa).

The protein belongs to the universal ribosomal protein uS7 family. As to quaternary structure, part of the 30S ribosomal subunit. Contacts proteins S9 and S11.

In terms of biological role, one of the primary rRNA binding proteins, it binds directly to 16S rRNA where it nucleates assembly of the head domain of the 30S subunit. Is located at the subunit interface close to the decoding center, probably blocks exit of the E-site tRNA. This Blochmanniella floridana protein is Small ribosomal subunit protein uS7.